The following is a 620-amino-acid chain: Glutathione-regulated potassium-efflux system protein KefC (620 aa).

The next 12 helical transmembrane spans lie at 4–24, 26–46, 54–74, 90–110, 114–134, 149–169, 178–198, 218–238, 270–290, 294–314, 327–347, and 359–379; these read HTLL…PIAV, LGLG…PWGL, SILH…GLEL, GALQ…FLGL, VAEL…MQAM, FAVL…IPLL, LGAF…VVLL, VFSA…EEVG, GLLL…GTLV, LRIL…LWLV, WFAV…GAAQ, and ALTL…VLLT. The region spanning 399-518 is the RCK N-terminal domain; the sequence is QPRVIVAGFG…AGVAMPERET (120 aa). The interval 599-620 is disordered; it reads QGTAEGKHSGEAADEPEVKPSI.

This sequence belongs to the monovalent cation:proton antiporter 2 (CPA2) transporter (TC 2.A.37) family. KefC subfamily. Homodimer. Interacts with the regulatory subunit KefF.

Its subcellular location is the cell inner membrane. Functionally, pore-forming subunit of a potassium efflux system that confers protection against electrophiles. Catalyzes K(+)/H(+) antiport. This chain is Glutathione-regulated potassium-efflux system protein KefC, found in Salmonella choleraesuis (strain SC-B67).